We begin with the raw amino-acid sequence, 599 residues long: Protein ECM25 (599 aa).

In terms of domain architecture, Rho-GAP spans 181 to 359 (NRLTPLAIRQ…NLLDFFPEIA (179 aa)). Disordered stretches follow at residues 362 to 447 (ISSP…PLPI), 468 to 495 (ASSS…SSTD), and 543 to 563 (ELQE…KFSQ). Low complexity-rich tracts occupy residues 363 to 373 (SSPPSSVSSSS), 396 to 413 (TLPR…TSPT), and 468 to 483 (ASSS…KTPS). Positions 543 to 562 (ELQEKKKKNETTSKTADKFS) are enriched in basic and acidic residues.

It localises to the cytoplasm. Functionally, may be involved in cell wall organization and biogenesis. In Saccharomyces cerevisiae (strain ATCC 204508 / S288c) (Baker's yeast), this protein is Protein ECM25 (ECM25).